The sequence spans 93 residues: Integration host factor subunit beta (93 aa).

Belongs to the bacterial histone-like protein family. In terms of assembly, heterodimer of an alpha and a beta chain.

This protein is one of the two subunits of integration host factor, a specific DNA-binding protein that functions in genetic recombination as well as in transcriptional and translational control. This Cereibacter sphaeroides (strain ATCC 17023 / DSM 158 / JCM 6121 / CCUG 31486 / LMG 2827 / NBRC 12203 / NCIMB 8253 / ATH 2.4.1.) (Rhodobacter sphaeroides) protein is Integration host factor subunit beta (ihfB).